Here is a 108-residue protein sequence, read N- to C-terminus: Small ribosomal subunit protein bS16 (108 aa).

This sequence belongs to the bacterial ribosomal protein bS16 family.

The chain is Small ribosomal subunit protein bS16 from Orientia tsutsugamushi (strain Boryong) (Rickettsia tsutsugamushi).